A 123-amino-acid chain; its full sequence is uncharacterized protein (123 aa).

A disordered region spans residues N100 to H123.

This is an uncharacterized protein from Acanthamoeba polyphaga mimivirus (APMV).